Here is a 188-residue protein sequence, read N- to C-terminus: Adenine phosphoribosyltransferase (188 aa).

The protein belongs to the purine/pyrimidine phosphoribosyltransferase family. As to quaternary structure, homodimer.

The protein localises to the cytoplasm. The enzyme catalyses AMP + diphosphate = 5-phospho-alpha-D-ribose 1-diphosphate + adenine. Its pathway is purine metabolism; AMP biosynthesis via salvage pathway; AMP from adenine: step 1/1. Functionally, catalyzes a salvage reaction resulting in the formation of AMP, that is energically less costly than de novo synthesis. The chain is Adenine phosphoribosyltransferase from Neisseria meningitidis serogroup B (strain ATCC BAA-335 / MC58).